A 457-amino-acid chain; its full sequence is Angiopoietin-related protein 6 (457 aa).

The N-terminal stretch at 1–24 (MGTARLRKLQLLLLLGAWRALGGA) is a signal peptide. Coiled-coil stretches lie at residues 51-77 (DSEL…RAAE) and 126-164 (LLAE…QHSS). The disordered stretch occupies residues 201–235 (SNTSRRLDQTPEHQREQSLRQQGPPSSLLPTGHLA). Asparagine 202 carries N-linked (GlcNAc...) asparagine glycosylation. Over residues 205–218 (RRLDQTPEHQREQS) the composition is skewed to basic and acidic residues. Residues 219-229 (LRQQGPPSSLL) show a composition bias toward polar residues. Residues 238 to 456 (TRPVGPWRDC…KAVMLTRLVR (219 aa)) form the Fibrinogen C-terminal domain. Cystine bridges form between cysteine 247-cysteine 274 and cysteine 397-cysteine 410.

In terms of tissue distribution, highly expressed in the liver, specifically in hepatocytes, and weakly in the heart. Expressed in hematopoietic cells, platelets and mast cells, and detected at wounded skin.

It is found in the secreted. Its function is as follows. May play a role in the wound healing process. May promote epidermal proliferation, remodeling and regeneration. May promote the chemotactic activity of endothelial cells and induce neovascularization. May counteract high-fat diet-induced obesity and related insulin resistance through increased energy expenditure. The polypeptide is Angiopoietin-related protein 6 (Angptl6) (Mus musculus (Mouse)).